The primary structure comprises 233 residues: Nucleoside diphosphate kinase 2, chloroplastic (233 aa).

The N-terminal 67 residues, 1 to 67 (MEAMSGLSSP…LISHSLPRKK (67 aa)), are a transit peptide targeting the chloroplast. Residues Lys93, Phe141, Arg169, Thr175, Arg186, and Asn196 each contribute to the ATP site. His199 functions as the Pros-phosphohistidine intermediate in the catalytic mechanism.

The protein belongs to the NDK family. The cofactor is Mg(2+).

The protein resides in the plastid. The protein localises to the chloroplast. The enzyme catalyses a 2'-deoxyribonucleoside 5'-diphosphate + ATP = a 2'-deoxyribonucleoside 5'-triphosphate + ADP. It catalyses the reaction a ribonucleoside 5'-diphosphate + ATP = a ribonucleoside 5'-triphosphate + ADP. Major role in the synthesis of nucleoside triphosphates other than ATP. The ATP gamma phosphate is transferred to the NDP beta phosphate via a ping-pong mechanism, using a phosphorylated active-site intermediate. This is Nucleoside diphosphate kinase 2, chloroplastic (NDPK2) from Spinacia oleracea (Spinach).